The primary structure comprises 422 residues: Metallocarboxypeptidase A (422 aa).

Residues 1–17 (MRSVLSLALLAANVVTA) form the signal peptide. A propeptide spans 18–112 (AVVSPFDYSG…FEAYSAGYAP (95 aa)) (activation peptide). The Peptidase M14 domain maps to 119–419 (SYHSYQDHIS…AGTVAMLKAV (301 aa)). Zn(2+) contacts are provided by His-179 and Glu-182. Substrate contacts are provided by residues 179 to 182 (HARE), Arg-237, and 254 to 255 (NR). A disulfide bond links Cys-248 and Cys-271. His-309 is a Zn(2+) binding site. Residue 310-311 (SY) participates in substrate binding. Glu-385 acts as the Proton donor/acceptor in catalysis.

Belongs to the peptidase M14 family. The cofactor is Zn(2+).

It is found in the secreted. Extracellular metalloprotease that contributes to pathogenicity. The protein is Metallocarboxypeptidase A (MCPA) of Trichophyton tonsurans (Scalp ringworm fungus).